The primary structure comprises 185 residues: Signal peptidase I P (185 aa).

Topologically, residues 1 to 14 are cytoplasmic; it reads MFDKEKRKKSNIID. Residues 15 to 34 traverse the membrane as a helical segment; that stretch reads WIKAILIALILVFLVRTFLF. At 35–185 the chain is on the extracellular side; the sequence is EPYIVQGESM…FPLDRIRHAK (151 aa). Residues Ser-43 and Lys-85 contribute to the active site.

This sequence belongs to the peptidase S26 family.

It is found in the cell membrane. The catalysed reaction is Cleavage of hydrophobic, N-terminal signal or leader sequences from secreted and periplasmic proteins.. The protein is Signal peptidase I P (sipP) of Bacillus subtilis subsp. natto.